Reading from the N-terminus, the 239-residue chain is Ribonuclease HII (239 aa).

Residues 30 to 221 (GPVAGVDEVG…VRRLVTAGTP (192 aa)) enclose the RNase H type-2 domain. The a divalent metal cation site is built by Asp36, Glu37, and Asp130.

This sequence belongs to the RNase HII family. Mn(2+) is required as a cofactor. Requires Mg(2+) as cofactor.

The protein localises to the cytoplasm. The catalysed reaction is Endonucleolytic cleavage to 5'-phosphomonoester.. Functionally, endonuclease that specifically degrades the RNA of RNA-DNA hybrids. In Mycobacterium sp. (strain JLS), this protein is Ribonuclease HII.